The following is a 250-amino-acid chain: N-acyl homoserine lactonase (250 aa).

The Zn(2+) site is built by histidine 104, histidine 106, aspartate 108, histidine 109, histidine 169, aspartate 191, and histidine 235.

The protein belongs to the metallo-beta-lactamase superfamily. As to quaternary structure, monomer. Zn(2+) is required as a cofactor.

The catalysed reaction is an N-acyl-L-homoserine lactone + H2O = an N-acyl-L-homoserine + H(+). With respect to regulation, completely inhibited by Cu(2+) and Ag(+). Partially inhibited by Cr(2+), Pb(2+) and Fe(2+). Mg(2+), Ca(2+), Mn(2+), Co(2+), Ni(2+), Zn(2+) and Cd(2+) have no effect on activity. The chelating agents EDTA, 2,2'bipyridine and o-phenanthroline have no effect on enzyme activity. Functionally, hydrolyzes acyl homoserine lactones with varying lengths of acyl chains, with a slight preference for substrates without 3-oxo substitution at the C3 position. Has only residual activity towards non-acyl lactones, and no activity towards non-cyclic esters. In Bacillus sp, this protein is N-acyl homoserine lactonase.